The sequence spans 390 residues: Transaldolase (390 aa).

Catalysis depends on lysine 135, which acts as the Schiff-base intermediate with substrate. EF-hand domains are found at residues 329–364 (AFCH…FDAL) and 365–388 (DHDH…LALT). The Ca(2+) site is built by aspartate 342, aspartate 344, aspartate 346, cysteine 348, glutamate 353, aspartate 365, aspartate 367, aspartate 369, arginine 371, and aspartate 376.

This sequence belongs to the transaldolase family. Type 1 subfamily.

The protein resides in the cytoplasm. The enzyme catalyses D-sedoheptulose 7-phosphate + D-glyceraldehyde 3-phosphate = D-erythrose 4-phosphate + beta-D-fructose 6-phosphate. It functions in the pathway carbohydrate degradation; pentose phosphate pathway; D-glyceraldehyde 3-phosphate and beta-D-fructose 6-phosphate from D-ribose 5-phosphate and D-xylulose 5-phosphate (non-oxidative stage): step 2/3. Functionally, transaldolase is important for the balance of metabolites in the pentose-phosphate pathway. The polypeptide is Transaldolase (Prochlorococcus marinus (strain MIT 9313)).